The chain runs to 101 residues: Urinary protein 3 (101 aa).

Residues 1–21 form the signal peptide; that stretch reads MGKHILLLPLGLSLLMSSLLA. In terms of domain architecture, UPAR/Ly6 spans 22 to 99; it reads LQCFRCISFD…CSATPFCNMV (78 aa). 5 cysteine pairs are disulfide-bonded: C24–C51, C27–C36, C43–C70, C73–C89, and C90–C96.

It is found in the secreted. The sequence is that of Urinary protein 3 from Rattus norvegicus (Rat).